The sequence spans 226 residues: UPF0758 protein LL1007 (226 aa).

One can recognise an MPN domain in the interval 103 to 225; sequence QVLSSREYGL…YFSFREEEIR (123 aa). Zn(2+) contacts are provided by His-174, His-176, and Asp-187. A JAMM motif motif is present at residues 174-187; it reads HNHPSGNLKPSQAD.

Belongs to the UPF0758 family.

The sequence is that of UPF0758 protein LL1007 from Lactococcus lactis subsp. lactis (strain IL1403) (Streptococcus lactis).